The chain runs to 533 residues: Putative adhesin domain-containing protein LiaX (533 aa).

Residues 1–277 (MKERERVLEL…EFNYPNPQAS (277 aa)) are binds the antibiotic daptomycin (DAP) and the antimicrobial peptide human LL-37, under physiologically relevant concentrations. Protects the OG1RF and S613 strains from LL-37-mediated killing in a concentration-dependent manner. Residues 63–89 (NALEKGESEGPTVDSFEENTQDSAEKD) are disordered. Residues 83 to 186 (QDSAEKDREN…EEELKNIRKE (104 aa)) are a coiled coil. A putative adhesin region region spans residues 279–526 (IDVKVANGTV…INASTTTGSI (248 aa)). Positions 289–526 (VFKTWDQEDV…INASTTTGSI (238 aa)) are involved in cell membrane remodeling.

Post-translationally, may undergo proteolytic cleavage, allowing release of the N-terminal region into the extracellular environment.

Its subcellular location is the secreted. The protein resides in the cell wall. It is found in the cell membrane. Functionally, involved in cell membrane remodeling, perhaps acting by negative modulation of the liaFSR and liaXYZ gene clusters, thereby regulating content and localization of anionic phospholipids. Binds to the antibiotic daptomycin (DAP) and to cationic antimicrobial peptides, such as human LL-37, perhaps functioning as a sensor that activates the cell envelope stress response. In Enterococcus faecalis (strain ATCC 700802 / V583), this protein is Putative adhesin domain-containing protein LiaX.